The sequence spans 226 residues: Uracil-DNA glycosylase (226 aa).

Catalysis depends on Asp-64, which acts as the Proton acceptor.

It belongs to the uracil-DNA glycosylase (UDG) superfamily. UNG family.

It is found in the cytoplasm. The catalysed reaction is Hydrolyzes single-stranded DNA or mismatched double-stranded DNA and polynucleotides, releasing free uracil.. Functionally, excises uracil residues from the DNA which can arise as a result of misincorporation of dUMP residues by DNA polymerase or due to deamination of cytosine. This is Uracil-DNA glycosylase from Proteus mirabilis (strain HI4320).